Here is a 272-residue protein sequence, read N- to C-terminus: RELT-like protein 1 (272 aa).

Positions 1-23 (MALWGLPGSAVLAASVFVGGAVS) are cleaved as a signal peptide. Residues 24 to 58 (SPLVAADNTGSHTLHSRAETTPSSPTNNPGNGHPE) are Extracellular-facing. A disordered region spans residues 33–52 (GSHTLHSRAETTPSSPTNNP). Residues 59–79 (YIAYVLVPVFFVMGLLGVLIC) traverse the membrane as a helical segment. The Cytoplasmic portion of the chain corresponds to 80–272 (HLLKKKGYRC…PVKRERSDTE (193 aa)). The stretch at 90–114 (TTEAEQEVEEEKVEKIELNDSINEN) forms a coiled coil. Residues S110 and S115 each carry the phosphoserine modification. Disordered stretches follow at residues 146 to 171 (DIESPVTPSTPGSPPVSPGPLSPGAT) and 235 to 272 (EHKSNQKERRSLMSVSGIESVNGDVPATPVKRERSDTE). Residues 156–166 (PGSPPVSPGPL) show a composition bias toward pro residues. Basic and acidic residues predominate over residues 235–245 (EHKSNQKERRS). Phosphoserine is present on residues S245 and S248.

This sequence belongs to the RELT family. As to quaternary structure, interacts with RELT, RELL2, OXSR1 and PLSCR1.

The protein resides in the cell membrane. Functionally, induces activation of MAPK14/p38 cascade, when overexpressed. Induces apoptosis, when overexpressed. This is RELT-like protein 1 (Rell1) from Mus musculus (Mouse).